The chain runs to 842 residues: MPLSYQHFRRILLLDEEAGPLEEELPRLADEDLNRRVAEDLNLQLPNVSIPWTHKVGNFTGLYSSTIPVFNPNWKTPSFPDIHLHQDIINKCEQFVGPLTVNEKRRLNLVMPARFFPISTKYLPLEKGIKPYYPDNVVNHYFQTRHYLHTLWKAGILYKRETTRSASFCGSPYSWEQELHHGAFLDGPSRMGEESFHHQSSGIFSRPPVGSSIQSKHQKSRLGPQSQQRPLDGSQQGRSGSIRAGVHSPTRRPFGVEPSGSRHAKNIASRSASCLHQSAVRKAAYPNHSTFERHSSSGHAVEFHNISPSSAGSQSKRPVFSCWWLQFRNSEPCSDYCLTHLVNLLEDWGPCTEHGKHHIRIPRTPARITGGVFLVDKNPHNTAESRLVVDFSQFSRGSSRVSWPKFAVPNLQSLTNLLSSNLSWLSLDVSAAFYHLPLHPAAMPHLLVGSSGLSRYVARLSSNSRIINHQYGTLPNLHDSCSRNLYVSLMLLFKTFGRKLHLYSHPIIMGFRKIPMGVGLSPFLLAQFTSAICSVVRRAFPHCLAFSYMDDVVLGAKSVQHLESLYTSVTNFLLSLGIHLNPNKTKRWGYSLNFMGYVIGSWGSLPQEHIIMKIKDCFRKLPVNRPIDWKVCQRIVGLLGFAAPFTQCGYPALMPLYACIQSKQAFTFSPTYKAFLCKQYLNLYPVARQRPGLCQVFADATPTGWGLAIGHQRMRGTFMAPLPIHTAELLAACFARSRSGAKLIGTDNSVVLSRKYTSFPWLLGCAANWILRGTSFVYVPSALNPADDPSRGRLGIYRPLLRLPFQPSTGRTSLYAVSPSVPSHLPDRVHFASPLHVAWRPP.

The interval 1–177 (MPLSYQHFRR…FCGSPYSWEQ (177 aa)) is terminal protein domain (TP). The tract at residues 178 to 345 (ELHHGAFLDG…YCLTHLVNLL (168 aa)) is spacer. Residues 186 to 273 (DGPSRMGEES…AKNIASRSAS (88 aa)) form a disordered region. Residues 223–239 (GPQSQQRPLDGSQQGRS) show a composition bias toward polar residues. The polymerase/reverse transcriptase domain (RT) stretch occupies residues 346-689 (EDWGPCTEHG…YLNLYPVARQ (344 aa)). The 244-residue stretch at 356–599 (KHHIRIPRTP…YSLNFMGYVI (244 aa)) folds into the Reverse transcriptase domain. D428, D550, and D551 together coordinate Mg(2+).

The protein belongs to the hepadnaviridae P protein family.

It catalyses the reaction DNA(n) + a 2'-deoxyribonucleoside 5'-triphosphate = DNA(n+1) + diphosphate. The catalysed reaction is Endonucleolytic cleavage to 5'-phosphomonoester.. Activated by host HSP70 and HSP40 in vitro to be able to bind the epsilon loop of the pgRNA. Because deletion of the RNase H region renders the protein partly chaperone-independent, the chaperones may be needed indirectly to relieve occlusion of the RNA-binding site by this domain. Inhibited by several reverse-transcriptase inhibitors: Lamivudine, Adefovir and Entecavir. Functionally, multifunctional enzyme that converts the viral RNA genome into dsDNA in viral cytoplasmic capsids. This enzyme displays a DNA polymerase activity that can copy either DNA or RNA templates, and a ribonuclease H (RNase H) activity that cleaves the RNA strand of RNA-DNA heteroduplexes in a partially processive 3'- to 5'-endonucleasic mode. Neo-synthesized pregenomic RNA (pgRNA) are encapsidated together with the P protein, and reverse-transcribed inside the nucleocapsid. Initiation of reverse-transcription occurs first by binding the epsilon loop on the pgRNA genome, and is initiated by protein priming, thereby the 5'-end of (-)DNA is covalently linked to P protein. Partial (+)DNA is synthesized from the (-)DNA template and generates the relaxed circular DNA (RC-DNA) genome. After budding and infection, the RC-DNA migrates in the nucleus, and is converted into a plasmid-like covalently closed circular DNA (cccDNA). The activity of P protein does not seem to be necessary for cccDNA generation, and is presumably released from (+)DNA by host nuclear DNA repair machinery. In Homo sapiens (Human), this protein is Protein P.